Reading from the N-terminus, the 159-residue chain is NADH-quinone oxidoreductase subunit I (159 aa).

2 4Fe-4S ferredoxin-type domains span residues R51 to D80 and T90 to N119. 8 residues coordinate [4Fe-4S] cluster: C60, C63, C66, C70, C99, C102, C105, and C109.

This sequence belongs to the complex I 23 kDa subunit family. As to quaternary structure, NDH-1 is composed of 14 different subunits. Subunits NuoA, H, J, K, L, M, N constitute the membrane sector of the complex. The cofactor is [4Fe-4S] cluster.

The protein resides in the cell membrane. It catalyses the reaction a quinone + NADH + 5 H(+)(in) = a quinol + NAD(+) + 4 H(+)(out). In terms of biological role, NDH-1 shuttles electrons from NADH, via FMN and iron-sulfur (Fe-S) centers, to quinones in the respiratory chain. The immediate electron acceptor for the enzyme in this species is believed to be ubiquinone. Couples the redox reaction to proton translocation (for every two electrons transferred, four hydrogen ions are translocated across the cytoplasmic membrane), and thus conserves the redox energy in a proton gradient. The chain is NADH-quinone oxidoreductase subunit I from Rickettsia africae (strain ESF-5).